Here is a 180-residue protein sequence, read N- to C-terminus: Large ribosomal subunit protein bL17 (180 aa).

The disordered stretch occupies residues 134–180 (AQAKAKKAAAMPTEESEAKPAEEGDVVGASEPDAKAPEEPPTEAPEN).

It belongs to the bacterial ribosomal protein bL17 family. Part of the 50S ribosomal subunit. Contacts protein L32.

This is Large ribosomal subunit protein bL17 from Mycobacterium tuberculosis (strain CDC 1551 / Oshkosh).